Reading from the N-terminus, the 619-residue chain is Dihydroxy-acid dehydratase 1 (619 aa).

A Mg(2+)-binding site is contributed by aspartate 81. Residue cysteine 122 coordinates [2Fe-2S] cluster. 2 residues coordinate Mg(2+): aspartate 123 and lysine 124. Lysine 124 bears the N6-carboxylysine mark. Position 198 (cysteine 198) interacts with [2Fe-2S] cluster. Glutamate 494 contacts Mg(2+). Serine 520 functions as the Proton acceptor in the catalytic mechanism.

Belongs to the IlvD/Edd family. As to quaternary structure, homodimer. It depends on [2Fe-2S] cluster as a cofactor. Mg(2+) is required as a cofactor.

It carries out the reaction (2R)-2,3-dihydroxy-3-methylbutanoate = 3-methyl-2-oxobutanoate + H2O. The enzyme catalyses (2R,3R)-2,3-dihydroxy-3-methylpentanoate = (S)-3-methyl-2-oxopentanoate + H2O. The protein operates within amino-acid biosynthesis; L-isoleucine biosynthesis; L-isoleucine from 2-oxobutanoate: step 3/4. Its pathway is amino-acid biosynthesis; L-valine biosynthesis; L-valine from pyruvate: step 3/4. Functions in the biosynthesis of branched-chain amino acids. Catalyzes the dehydration of (2R,3R)-2,3-dihydroxy-3-methylpentanoate (2,3-dihydroxy-3-methylvalerate) into 2-oxo-3-methylpentanoate (2-oxo-3-methylvalerate) and of (2R)-2,3-dihydroxy-3-methylbutanoate (2,3-dihydroxyisovalerate) into 2-oxo-3-methylbutanoate (2-oxoisovalerate), the penultimate precursor to L-isoleucine and L-valine, respectively. This chain is Dihydroxy-acid dehydratase 1, found in Bordetella bronchiseptica (strain ATCC BAA-588 / NCTC 13252 / RB50) (Alcaligenes bronchisepticus).